Consider the following 301-residue polypeptide: Mitochondrial carnitine/acylcarnitine carrier protein (301 aa).

Ala2 carries the post-translational modification N-acetylalanine. Over 2 to 12 (ADQPKPISPLK) the chain is Cytoplasmic. Solcar repeat units lie at residues 8-99 (ISPL…GKKL), 108-196 (LSYP…VKNI), and 207-293 (LSVP…AMKF). A helical transmembrane segment spans residues 13–31 (NLLAGGFGGVCLVFVGHPL). The Mitochondrial matrix portion of the chain corresponds to 32 to 73 (DTVKVRLQTQPPSLPGQPPMYSGTFDCFRKTLFREGIRGLYR). The helical transmembrane segment at 74 to 93 (GMAAPIIGVTPMFAVCFFGF) threads the bilayer. Topologically, residues 94 to 112 (GLGKKLQQKHPEDVLSYPQ) are cytoplasmic. A helical membrane pass occupies residues 113-131 (LFAAGMLSGIFTTGIMTPG). At 132–170 (ERIKCLLQIQASSGETKYTGTLDCAKKLYQEFGIRGIYK) the chain is on the mitochondrial matrix side. Lys148 and Lys157 each carry N6-acetyllysine. At Lys170 the chain carries N6-acetyllysine; alternate. Lys170 carries the N6-succinyllysine; alternate modification. The chain crosses the membrane as a helical span at residues 171-190 (GTVVTLMRDVPASGMYFMTY). The Cytoplasmic segment spans residues 191–211 (EWVKNIFTPEGKRVSELSVPR). A helical membrane pass occupies residues 212–230 (VLVAGGIAGIFNWAVAIPP). The Mitochondrial matrix portion of the chain corresponds to 231–267 (DVLKSRFQTAPPGKYPNGFRDVLRELIPDEGVTSLYK). A helical transmembrane segment spans residues 268–287 (GFNAVMIRAFPANAACFLGF). Residues 288 to 301 (EVAMKFLNWATPNL) are Cytoplasmic-facing.

This sequence belongs to the mitochondrial carrier (TC 2.A.29) family.

Its subcellular location is the mitochondrion inner membrane. It carries out the reaction O-acetyl-(R)-carnitine(in) + (R)-carnitine(out) = O-acetyl-(R)-carnitine(out) + (R)-carnitine(in). It catalyses the reaction an O-acyl-(R)-carnitine(in) + (R)-carnitine(out) = an O-acyl-(R)-carnitine(out) + (R)-carnitine(in). The enzyme catalyses O-propanoyl-(R)-carnitine(in) + (R)-carnitine(out) = O-propanoyl-(R)-carnitine(out) + (R)-carnitine(in). The catalysed reaction is O-hexadecanoyl-(R)-carnitine(in) + (R)-carnitine(out) = O-hexadecanoyl-(R)-carnitine(out) + (R)-carnitine(in). It carries out the reaction O-octanoyl-(R)-carnitine(in) + (R)-carnitine(out) = O-octanoyl-(R)-carnitine(out) + (R)-carnitine(in). It catalyses the reaction (R)-carnitine(in) = (R)-carnitine(out). Its function is as follows. Mediates the electroneutral exchange of acylcarnitines (O-acyl-(R)-carnitine or L-acylcarnitine) of different acyl chain lengths (ranging from O-acetyl-(R)-carnitine to long-chain O-acyl-(R)-carnitines) with free carnitine ((R)-carnitine or L-carnitine) across the mitochondrial inner membrane, via a ping-pong mechanism. Key player in the mitochondrial oxidation pathway, it translocates the fatty acids in the form of acylcarnitines into the mitochondrial matrix, where the carnitine palmitoyltransferase 2 (CPT-2) activates them to undergo fatty acid beta-oxidation. Catalyzes the unidirectional transport (uniport) of carnitine at lower rates than the antiport (exchange). The sequence is that of Mitochondrial carnitine/acylcarnitine carrier protein (SLC25A20) from Macaca fascicularis (Crab-eating macaque).